Here is a 324-residue protein sequence, read N- to C-terminus: Protein ChrB (324 aa).

In terms of biological role, together with ChrA1, this protein reduces chromate accumulation and is essential for chromate resistance, possibly as a regulatory protein. The chain is Protein ChrB from Cupriavidus metallidurans (strain ATCC 43123 / DSM 2839 / NBRC 102507 / CH34) (Ralstonia metallidurans).